The primary structure comprises 72 residues: Guanine nucleotide-binding protein G(I)/G(S)/G(O) subunit gamma-12 (72 aa).

Serine 2 bears the N-acetylserine mark. Phosphoserine is present on residues serine 10 and serine 26. Position 42 is a phosphotyrosine (tyrosine 42). Serine 49 carries the post-translational modification Phosphoserine. Cysteine 69 is modified (cysteine methyl ester). A lipid anchor (S-geranylgeranyl cysteine) is attached at cysteine 69. Positions 70-72 are cleaved as a propeptide — removed in mature form; that stretch reads IIL.

The protein belongs to the G protein gamma family. In terms of assembly, g proteins are composed of 3 units, alpha, beta and gamma.

It is found in the cell membrane. Its function is as follows. Guanine nucleotide-binding proteins (G proteins) are involved as a modulator or transducer in various transmembrane signaling systems. The beta and gamma chains are required for the GTPase activity, for replacement of GDP by GTP, and for G protein-effector interaction. The polypeptide is Guanine nucleotide-binding protein G(I)/G(S)/G(O) subunit gamma-12 (Gng12) (Mus musculus (Mouse)).